The following is a 64-amino-acid chain: Small ribosomal subunit protein bS21 (64 aa).

Residues 39–64 form a disordered region; the sequence is EKPSVKRKKKALAAKKRAVKKARKSF. Residues 43-64 are compositionally biased toward basic residues; the sequence is VKRKKKALAAKKRAVKKARKSF.

Belongs to the bacterial ribosomal protein bS21 family.

The sequence is that of Small ribosomal subunit protein bS21 (rpsU) from Myxococcus xanthus.